A 280-amino-acid chain; its full sequence is 2-dehydro-3-deoxyphosphooctonate aldolase (280 aa).

It belongs to the KdsA family.

It is found in the cytoplasm. The catalysed reaction is D-arabinose 5-phosphate + phosphoenolpyruvate + H2O = 3-deoxy-alpha-D-manno-2-octulosonate-8-phosphate + phosphate. The protein operates within carbohydrate biosynthesis; 3-deoxy-D-manno-octulosonate biosynthesis; 3-deoxy-D-manno-octulosonate from D-ribulose 5-phosphate: step 2/3. It participates in bacterial outer membrane biogenesis; lipopolysaccharide biosynthesis. The protein is 2-dehydro-3-deoxyphosphooctonate aldolase of Neisseria meningitidis serogroup C / serotype 2a (strain ATCC 700532 / DSM 15464 / FAM18).